A 269-amino-acid polypeptide reads, in one-letter code: Signal recognition particle receptor subunit beta (269 aa).

Residues 35-55 (LLSVAVALLAVLLTLVFWKFI) form a helical membrane-spanning segment. Residues 69-77 (GLCDSGKTL) and 90-93 (TQTS) contribute to the GTP site. Ser-110 carries the phosphoserine modification. GTP-binding positions include Gly-118 and 178–181 (NKQD). Position 212 is a phosphothreonine (Thr-212). Residue Ala-246 participates in GTP binding.

It belongs to the SRP receptor beta subunit family. As to quaternary structure, heterodimer with SRPRA.

It localises to the endoplasmic reticulum membrane. Functionally, component of the SRP (signal recognition particle) receptor. Ensures, in conjunction with the signal recognition particle, the correct targeting of the nascent secretory proteins to the endoplasmic reticulum membrane system. May mediate the membrane association of SR. The sequence is that of Signal recognition particle receptor subunit beta (Srprb) from Mus musculus (Mouse).